Consider the following 852-residue polypeptide: Taste receptor type 1 member 3 (852 aa).

Positions methionine 1 to glycine 20 are cleaved as a signal peptide. Residues alanine 21–leucine 570 lie on the Extracellular side of the membrane. 8 N-linked (GlcNAc...) asparagine glycosylation sites follow: asparagine 85, asparagine 130, asparagine 264, asparagine 285, asparagine 380, asparagine 411, asparagine 432, and asparagine 475. The chain crosses the membrane as a helical span at residues leucine 571–valine 591. Topologically, residues histidine 592–glycine 603 are cytoplasmic. A helical transmembrane segment spans residues glycine 604–phenylalanine 624. At proline 625 to leucine 639 the chain is on the extracellular side. A helical transmembrane segment spans residues serine 640–valine 660. At glutamate 661–tryptophan 682 the chain is on the cytoplasmic side. A helical membrane pass occupies residues leucine 683–phenylalanine 703. At proline 704 to serine 729 the chain is on the extracellular side. The helical transmembrane segment at phenylalanine 730–leucine 750 threads the bilayer. Residues valine 751–arginine 762 are Cytoplasmic-facing. Residues glycine 763 to alanine 783 form a helical membrane-spanning segment. At asparagine 784–proline 791 the chain is on the extracellular side. Residues alanine 792 to proline 812 form a helical membrane-spanning segment. Residues arginine 813 to glutamate 852 are Cytoplasmic-facing. The disordered stretch occupies residues glycine 833 to glutamate 852. A compositionally biased stretch (basic and acidic residues) spans glycine 839–glutamate 852.

It belongs to the G-protein coupled receptor 3 family. TAS1R subfamily. Forms homodimers or heterodimers with TAS1R1 and TAS1R2.

The protein resides in the cell membrane. In terms of biological role, putative taste receptor. TAS1R1/TAS1R3 responds to the umami taste stimulus (the taste of monosodium glutamate). TAS1R2/TAS1R3 recognizes diverse natural and synthetic sweeteners. TAS1R3 is essential for the recognition and response to the disaccharide trehalose. Sequence differences within and between species can significantly influence the selectivity and specificity of taste responses. This chain is Taste receptor type 1 member 3 (TAS1R3), found in Gorilla gorilla gorilla (Western lowland gorilla).